Consider the following 256-residue polypeptide: Galactitol 2-dehydrogenase (256 aa).

Residues 15 to 17, D36, 59 to 60, N86, Y152, and K156 each bind NAD(+); these read RGI and DV. Y152 functions as the Proton acceptor in the catalytic mechanism.

The protein belongs to the short-chain dehydrogenases/reductases (SDR) family.

The catalysed reaction is galactitol + NAD(+) = keto-D-tagatose + NADH + H(+). It catalyses the reaction keto-D-fructose + NADH + H(+) = D-sorbitol + NAD(+). It participates in carbohydrate metabolism. Involved in galactitol catabolism. Catalyzes the oxidation of galactitol to D-tagatose. Can also catalyze the oxidation of D-sorbitol to D-fructose. The protein is Galactitol 2-dehydrogenase of Agrobacterium fabrum (strain C58 / ATCC 33970) (Agrobacterium tumefaciens (strain C58)).